Here is an 807-residue protein sequence, read N- to C-terminus: F-box protein YLR352W (807 aa).

An F-box domain is found at 220-266 (LNDCIDLPSHVLWKILKMLPELQKLDLSHTSIDDSTLYHGIPHWKNL). The span at 607–616 (DNNSHVEDSQ) shows a compositional bias: basic and acidic residues. Disordered regions lie at residues 607-647 (DNNS…NPFA) and 716-739 (HLFE…EHSS). 2 stretches are compositionally biased toward polar residues: residues 627-644 (SLLS…SSAN) and 723-736 (SRSG…LTGE).

In terms of assembly, interacts with SKP1 and CDC53. Component of the probable SCF(YBR352W) complex containing CDC53, SKP1, RBX1 and YBR352W.

It participates in protein modification; protein ubiquitination. Its function is as follows. Substrate recognition component of a SCF (SKP1-CUL1-F-box protein) E3 ubiquitin-protein ligase complex which mediates the ubiquitination and subsequent proteasomal degradation of target proteins. Probably recognizes and binds to phosphorylated target proteins. In Saccharomyces cerevisiae (strain ATCC 204508 / S288c) (Baker's yeast), this protein is F-box protein YLR352W.